Here is a 218-residue protein sequence, read N- to C-terminus: Glutathione S-transferase Mu 1 (218 aa).

Residues 2-88 (PMTLGYWDIR…YIARKHNLCG (87 aa)) enclose the GST N-terminal domain. 7–8 (YW) contacts glutathione. Thr34 is subject to Phosphothreonine. Residues 43–46 (RSQW), Lys50, 59–60 (NL), and 72–73 (QS) each bind glutathione. Positions 90-208 (TEEEKIRVDI…KSSRFLPKPL (119 aa)) constitute a GST C-terminal domain. Tyr116 contributes to the substrate binding site.

This sequence belongs to the GST superfamily. Mu family. In terms of assembly, homodimer.

The protein localises to the cytoplasm. The catalysed reaction is RX + glutathione = an S-substituted glutathione + a halide anion + H(+). It catalyses the reaction prostaglandin A2 + glutathione = prostaglandin A2-S-(R)-glutathione. The enzyme catalyses prostaglandin J2 + glutathione = prostaglandin J2-S-(R)-glutathione. It carries out the reaction prostaglandin J2 + glutathione = prostaglandin J2-S-(S)-glutathione. The catalysed reaction is prostaglandin A2 + glutathione = prostaglandin A2-S-(S)-glutathione. It catalyses the reaction 11(S)-hydroxy-14(S),15(S)-epoxy-(5Z,8Z,12E)-eicosatrienoate + glutathione = (11S,15S)-dihydroxy-14(R)-S-glutathionyl-(5Z,8Z,12E)-eicosatrienoate. In terms of biological role, conjugation of reduced glutathione to a wide number of exogenous and endogenous hydrophobic electrophiles. Involved in the formation of glutathione conjugates of both prostaglandin A2 (PGA2) and prostaglandin J2 (PGJ2). Participates in the formation of novel hepoxilin regioisomers. The protein is Glutathione S-transferase Mu 1 (GSTM1) of Macaca fascicularis (Crab-eating macaque).